A 568-amino-acid chain; its full sequence is 2-succinyl-5-enolpyruvyl-6-hydroxy-3-cyclohexene-1-carboxylate synthase (568 aa).

The protein belongs to the TPP enzyme family. MenD subfamily. In terms of assembly, homodimer. Mg(2+) serves as cofactor. Requires Mn(2+) as cofactor. Thiamine diphosphate is required as a cofactor.

It carries out the reaction isochorismate + 2-oxoglutarate + H(+) = 5-enolpyruvoyl-6-hydroxy-2-succinyl-cyclohex-3-ene-1-carboxylate + CO2. Its pathway is quinol/quinone metabolism; 1,4-dihydroxy-2-naphthoate biosynthesis; 1,4-dihydroxy-2-naphthoate from chorismate: step 2/7. It participates in quinol/quinone metabolism; menaquinone biosynthesis. In terms of biological role, catalyzes the thiamine diphosphate-dependent decarboxylation of 2-oxoglutarate and the subsequent addition of the resulting succinic semialdehyde-thiamine pyrophosphate anion to isochorismate to yield 2-succinyl-5-enolpyruvyl-6-hydroxy-3-cyclohexene-1-carboxylate (SEPHCHC). The polypeptide is 2-succinyl-5-enolpyruvyl-6-hydroxy-3-cyclohexene-1-carboxylate synthase (Haemophilus influenzae (strain PittEE)).